A 211-amino-acid polypeptide reads, in one-letter code: tRNA (guanine-N(7)-)-methyltransferase (211 aa).

Glutamate 44, aspartate 69, aspartate 96, and aspartate 118 together coordinate S-adenosyl-L-methionine. The active site involves aspartate 118. Lysine 122 contacts substrate. Residues 124 to 129 (RHEKRR) form an interaction with RNA region. Residues aspartate 154 and 191–194 (TEYE) contribute to the substrate site.

It belongs to the class I-like SAM-binding methyltransferase superfamily. TrmB family.

The enzyme catalyses guanosine(46) in tRNA + S-adenosyl-L-methionine = N(7)-methylguanosine(46) in tRNA + S-adenosyl-L-homocysteine. Its pathway is tRNA modification; N(7)-methylguanine-tRNA biosynthesis. Catalyzes the formation of N(7)-methylguanine at position 46 (m7G46) in tRNA. This chain is tRNA (guanine-N(7)-)-methyltransferase, found in Streptococcus mutans serotype c (strain ATCC 700610 / UA159).